The primary structure comprises 591 residues: MGMVTATAAAALLASPPQGHLGRRCHLVVPGLRLRPPASSSPPHAAPPLRLSNFVPRCYITNVEVDVSHTSEQEALDDHPPLLPACAIPVVHLRDVPDASPFPLHESASHSTDFEELPVLSEGELHTIAATPAHPAGLYALYASYLFGNLVEQLWNFAWPAALAILHPSLLPVAIVGFFTKLSVFIGAPIVGKLMDHFPRIPMYTGLNAVQVATQLISAAMVIYAMKNVTHASTSAVVLKPWFIALVAAGAIERLAGLALGVAMERDWVVLLAGTNRPVALAQANAVLNRLDLVCETVGASVFGLLLSKYHPVTCLKIACGLMICSFPVLVVLGQLINRFSCHALDSSRTPSEESICANLLDVRKIVQNGLSAIRNGWNEYKQQTVLPASVATVFLNFNVALAPGAIMTALLMHRGISPSIVGAFSGLCSIMGLVATFISSSLVERVGILKAGAAGLIVQASLLSVALVVYWTGSISQRTPLLIFLAAIALSRLGHMSYDVVGTQILQTGVPASKANLIGGMEVSISSLAELVMLGMAIIANDVSHFGFLAILSVSSVAGAAWMFCQWLGNPTDEQRELFMFDPHFQVEPI.

The N-terminal 66 residues, 1-66 (MGMVTATAAA…RCYITNVEVD (66 aa)), are a transit peptide targeting the chloroplast. 11 helical membrane passes run 159 to 179 (WPAALAILHPSLLPVAIVGFF), 206 to 226 (GLNAVQVATQLISAAMVIYAM), 242 to 262 (WFIALVAAGAIERLAGLALGV), 293 to 313 (LVCETVGASVFGLLLSKYHPV), 318 to 338 (IACGLMICSFPVLVVLGQLIN), 391 to 411 (VATVFLNFNVALAPGAIMTAL), 419 to 439 (PSIVGAFSGLCSIMGLVATFI), 452 to 472 (AGAAGLIVQASLLSVALVVYW), 482 to 502 (LLIFLAAIALSRLGHMSYDVV), 518 to 540 (LIGGMEVSISSLAELVMLGMAII), and 547 to 569 (FGFLAILSVSSVAGAAWMFCQWL).

Belongs to the ferroportin (FP) (TC 2.A.100) family. SLC40A subfamily.

It is found in the membrane. It localises to the plastid. Its subcellular location is the chloroplast envelope. May be involved in iron transport and iron homeostasis. This is Solute carrier family 40 member 2, chloroplastic from Oryza sativa subsp. japonica (Rice).